A 149-amino-acid polypeptide reads, in one-letter code: Large ribosomal subunit protein uL15 (149 aa).

The tract at residues 14 to 63 is disordered; that stretch reads ASRKRVGRGSGSGLGCTSGKGNKGQNARAGGGVRPGFEGGQMPLQRRLPK. Gly residues-rich tracts occupy residues 21 to 35 and 42 to 52; these read RGSG…GKGN and AGGGVRPGFEG.

Belongs to the universal ribosomal protein uL15 family. As to quaternary structure, part of the 50S ribosomal subunit.

Binds to the 23S rRNA. This chain is Large ribosomal subunit protein uL15, found in Nitratidesulfovibrio vulgaris (strain DSM 19637 / Miyazaki F) (Desulfovibrio vulgaris).